The following is a 516-amino-acid chain: GPI mannosyltransferase 4 (516 aa).

Over 1–5 the chain is Lumenal; the sequence is MMRYQ. The chain crosses the membrane as a helical span at residues 6–26; that stretch reads WWLYLVYAIGLMLCLGPSYIH. Over 27 to 60 the chain is Cytoplasmic; it reads PDEHFQCIEILAMQFMKVKGTIPWEFKSKFAARS. Residues 61-81 traverse the membrane as a helical segment; it reads YGPLLLVYGPLFTILESFPEI. Topologically, residues 82–175 are lumenal; sequence QDNPALILYS…IQRSNFKNSV (94 aa). The chain crosses the membrane as a helical span at residues 176 to 196; that stretch reads ILGLIFSFGVFNRVTFPAFIF. The Cytoplasmic segment spans residues 197–210; the sequence is LPCLILFWKFYRVH. The chain crosses the membrane as a helical span at residues 211 to 231; it reads WKSFSLLLLSFSFSSCLFVLI. Topologically, residues 232-270 are lumenal; that stretch reads DTNIYNNGKGFVITPLNNLKYNLNVQNLQVHGLHPRYTH. A helical membrane pass occupies residues 271–291; that stretch reads LLVNLPQIVGPVLLLAIFSGY. Over 292-295 the chain is Cytoplasmic; the sequence is KLDK. A helical membrane pass occupies residues 296–316; sequence LSTYAIISGLLFLSFFQHQEL. Residue arginine 317 is a topological domain, lumenal. Residues 318–338 form a helical membrane-spanning segment; that stretch reads FLVPLVPLLVTNLNWTPLSST. Topologically, residues 339–348 are cytoplasmic; the sequence is LVNKKIFKGT. The helical transmembrane segment at 349 to 369 threads the bilayer; it reads WLLFNIIMAFIMGISHQAGII. Residues 370-516 lie on the Lumenal side of the membrane; that stretch reads QFLGDYFHFR…GLTVYSIELL (147 aa). Asparagine 403 and asparagine 452 each carry an N-linked (GlcNAc...) asparagine glycan.

This sequence belongs to the glycosyltransferase 22 family. PIGZ subfamily.

It localises to the endoplasmic reticulum membrane. The protein operates within glycolipid biosynthesis; glycosylphosphatidylinositol-anchor biosynthesis. Its function is as follows. Alpha-1,2-mannosyltransferase involved in glycosylphosphatidylinositol-anchor biosynthesis. Transfers a fourth mannose to trimannosyl-GPIs during GPI precursor assembly. The presence of a fourth mannose in GPI is essential in fungi. Involved in plasmid maintenance with SMP2. The sequence is that of GPI mannosyltransferase 4 (SMP3) from Saccharomyces cerevisiae (strain ATCC 204508 / S288c) (Baker's yeast).